The primary structure comprises 237 residues: NAD-dependent protein deacylase (237 aa).

The region spanning 1-235 (MRIAVLSGAG…PGLLQRLPAL (235 aa)) is the Deacetylase sirtuin-type domain. Residue 8–28 (GAGISAESGVPTFRDDKNGLW) coordinates NAD(+). Tyr-53 and Arg-56 together coordinate substrate. Residue 86-89 (QNVD) coordinates NAD(+). His-104 acts as the Proton acceptor in catalysis. Residues Cys-112, Cys-115, Cys-138, and Cys-140 each coordinate Zn(2+). NAD(+) is bound by residues 177–179 (GTS), 203–205 (NPE), and Ala-221.

The protein belongs to the sirtuin family. Class III subfamily. It depends on Zn(2+) as a cofactor.

It is found in the cytoplasm. It carries out the reaction N(6)-acetyl-L-lysyl-[protein] + NAD(+) + H2O = 2''-O-acetyl-ADP-D-ribose + nicotinamide + L-lysyl-[protein]. The catalysed reaction is N(6)-succinyl-L-lysyl-[protein] + NAD(+) + H2O = 2''-O-succinyl-ADP-D-ribose + nicotinamide + L-lysyl-[protein]. Its function is as follows. NAD-dependent lysine deacetylase and desuccinylase that specifically removes acetyl and succinyl groups on target proteins. Modulates the activities of several proteins which are inactive in their acylated form. The polypeptide is NAD-dependent protein deacylase (Mycolicibacterium paratuberculosis (strain ATCC BAA-968 / K-10) (Mycobacterium paratuberculosis)).